A 368-amino-acid polypeptide reads, in one-letter code: MKDLFRISGVTHFELPLLPNNIPFACHPEFQSISLKIDKWFLGKMRIADETSKKKVLESRIGLYACMMHPHAKREKLVLAGKHLWAVFLLDDLLESSSKHEMPQLNLTISNLANGNSDEDYTNPLLALYREVMEEIRAAMEPPLLDRYVQCVGASLEAVKDQVHRRAEKSIPGVEEYKLARRATGFMEAVGGIMTEFCIGIRLSQAQIQSPIFRELLNSVSDHVILVNDLLSFRKEFYGGDYHHNWISVLLHHSPRGTSFQDVVDRLCEMIQAEELSILALRKKIADEEGSDSELTKFAREFPMVASGSLVWSYVTGRYHGYGNPLLTGEIFSGTWLLHPMATVVLPSKFRMDTMRFSLAPKKRDSFP.

Mg(2+) contacts are provided by D91, N228, and S232. A DDXXE motif motif is present at residues D91–E95.

It belongs to the terpene synthase family. Mg(2+) is required as a cofactor. The cofactor is Mn(2+).

The enzyme catalyses (2E,6E)-farnesyl diphosphate + H2O = (3S,6E)-nerolidol + diphosphate. It carries out the reaction (2E)-geranyl diphosphate + H2O = (S)-linalool + diphosphate. It participates in secondary metabolite biosynthesis; terpenoid biosynthesis. Sesquiterpene synthase converting farnesyl diphosphate to nerolidol. Also has a monoterpene synthase activity, converting geranyl diphosphate into linalool as the major product. Has no diterpene synthase activity. This chain is (3S,6E)-nerolidol synthase, found in Selaginella moellendorffii (Spikemoss).